The primary structure comprises 405 residues: MTTDLTGRARAQADDLISRLGLAGDPLGLGGNPGDHRVVVAMSGGVDSSVTAALLHHLGYDVVGVTLQLYDHGAAMAKKGACCAGQDIYDAKRVAEACGFRHYVLDYESRFREAVIEEFADTYLAGFTPIPCVRCNQTVKFADLLTTARQLGAVCMATGHYIQRVDGPNGAELRRAADAGKDQSYFLFATTHDQLDFLRFPLGHLNKDQTRELAEAFGLIVADKPDSQDICFVPNGRYVDIVEKVRPGASRPGEIVHVDGRVLGTHEGVIRYTVGQRRGLKIAVGDPLYVVRLDAAKAEVVVGPREALEIDTIALKDINWLGDEAPLDGAPVRVKVRSTRPPVPAALSVDGDDIRVVLARGEEGVAPGQACVFYSSDDEDRVLGGGWITSTSGGSGGSSGVRLIG.

ATP is bound by residues 41–48 and L67; that span reads AMSGGVDS. Residue C135 is the Nucleophile of the active site. An intrachain disulfide couples C135 to C231. G159 contacts ATP. An interaction with tRNA region spans residues 181 to 183; it reads KDQ. C231 (cysteine persulfide intermediate) is an active-site residue.

This sequence belongs to the MnmA/TRMU family.

The protein resides in the cytoplasm. It catalyses the reaction S-sulfanyl-L-cysteinyl-[protein] + uridine(34) in tRNA + AH2 + ATP = 2-thiouridine(34) in tRNA + L-cysteinyl-[protein] + A + AMP + diphosphate + H(+). In terms of biological role, catalyzes the 2-thiolation of uridine at the wobble position (U34) of tRNA, leading to the formation of s(2)U34. The chain is tRNA-specific 2-thiouridylase MnmA from Maricaulis maris (strain MCS10) (Caulobacter maris).